Here is a 406-residue protein sequence, read N- to C-terminus: Peptidase T (406 aa).

His78 contributes to the Zn(2+) binding site. Residue Asp80 is part of the active site. Asp139 serves as a coordination point for Zn(2+). Glu173 serves as the catalytic Proton acceptor. The Zn(2+) site is built by Glu174, Asp196, and His378.

The protein belongs to the peptidase M20B family. Zn(2+) serves as cofactor.

It localises to the cytoplasm. The catalysed reaction is Release of the N-terminal residue from a tripeptide.. In terms of biological role, cleaves the N-terminal amino acid of tripeptides. This chain is Peptidase T, found in Clostridium perfringens (strain 13 / Type A).